We begin with the raw amino-acid sequence, 490 residues long: Metal cation symporter ZIP14 (490 aa).

The first 28 residues, methionine 1–alanine 28, serve as a signal peptide directing secretion. The Extracellular segment spans residues valine 29–glycine 155. N-linked (GlcNAc...) asparagine glycans are attached at residues asparagine 75, asparagine 85, and asparagine 100. Residues alanine 127–proline 146 are disordered. A helical membrane pass occupies residues leucine 156 to methionine 176. The Cytoplasmic portion of the chain corresponds to lysine 177–leucine 184. A helical transmembrane segment spans residues leucine 185–isoleucine 205. At proline 206–serine 222 the chain is on the extracellular side. A helical transmembrane segment spans residues alanine 223 to leucine 243. The Cytoplasmic portion of the chain corresponds to lysine 244–glutamine 395. An HHHGHXHX-motif motif is present at residues histidine 249–tyrosine 256. The XEXPHE-motif motif lies at glutamate 374–glutamate 379. The chain crosses the membrane as a helical span at residues alanine 396 to leucine 416. The Extracellular portion of the chain corresponds to alanine 417–serine 422. Residues alanine 423 to phenylalanine 443 traverse the membrane as a helical segment. Residues proline 444 to alanine 459 are Cytoplasmic-facing. Residues leucine 460–leucine 480 form a helical membrane-spanning segment. The Extracellular portion of the chain corresponds to threonine 481–glycine 490.

It belongs to the ZIP transporter (TC 2.A.5) family. In terms of assembly, homotrimer. Post-translationally, ubiquitinated. Ubiquitination occurs upon iron depletion. The ubiquitinated form undergoes proteasomal degradation. N-glycosylated. N-glycosylation at Asn-100 is required for iron-regulated extraction of the transporter from membranes and subsequent proteasomal degradation.

It localises to the cell membrane. Its subcellular location is the apical cell membrane. The protein localises to the basolateral cell membrane. It is found in the early endosome membrane. The protein resides in the late endosome membrane. It localises to the lysosome membrane. The enzyme catalyses Zn(2+)(out) + 2 hydrogencarbonate(out) = Zn(2+)(in) + 2 hydrogencarbonate(in). The catalysed reaction is Mn(2+)(out) + 2 hydrogencarbonate(out) = Mn(2+)(in) + 2 hydrogencarbonate(in). It catalyses the reaction Fe(2+)(out) + 2 hydrogencarbonate(out) = Fe(2+)(in) + 2 hydrogencarbonate(in). It carries out the reaction Cd(2+)(out) + 2 hydrogencarbonate(out) = Cd(2+)(in) + 2 hydrogencarbonate(in). Functionally, electroneutral transporter of the plasma membrane mediating the cellular uptake of the divalent metal cations zinc, manganese and iron that are important for tissue homeostasis, metabolism, development and immunity. Functions as an energy-dependent symporter, transporting through the membranes an electroneutral complex composed of a divalent metal cation and two bicarbonate anions. Beside these endogenous cellular substrates, can also import cadmium a non-essential metal which is cytotoxic and carcinogenic. This is Metal cation symporter ZIP14 from Bos taurus (Bovine).